We begin with the raw amino-acid sequence, 478 residues long: ATP synthase subunit beta (478 aa).

Residue 164 to 171 (GGAGVGKT) participates in ATP binding.

Belongs to the ATPase alpha/beta chains family. F-type ATPases have 2 components, CF(1) - the catalytic core - and CF(0) - the membrane proton channel. CF(1) has five subunits: alpha(3), beta(3), gamma(1), delta(1), epsilon(1). CF(0) has three main subunits: a(1), b(2) and c(9-12). The alpha and beta chains form an alternating ring which encloses part of the gamma chain. CF(1) is attached to CF(0) by a central stalk formed by the gamma and epsilon chains, while a peripheral stalk is formed by the delta and b chains.

It localises to the cell membrane. The enzyme catalyses ATP + H2O + 4 H(+)(in) = ADP + phosphate + 5 H(+)(out). Produces ATP from ADP in the presence of a proton gradient across the membrane. The catalytic sites are hosted primarily by the beta subunits. This is ATP synthase subunit beta from Streptomyces avermitilis (strain ATCC 31267 / DSM 46492 / JCM 5070 / NBRC 14893 / NCIMB 12804 / NRRL 8165 / MA-4680).